The chain runs to 683 residues: PTS system mannose-specific EIIBCA component (683 aa).

The region spanning M1–A89 is the PTS EIIB type-1 domain. Residue C28 is the Phosphocysteine intermediate; for EIIB activity of the active site. The PTS EIIC type-1 domain maps to E117–K476. The next 10 membrane-spanning stretches (helical) occupy residues I126–F146, Y162–A182, W193–A213, V225–W245, M260–G280, F303–W323, P344–I364, L376–L396, G409–F429, and L442–L462. The 105-residue stretch at D550–N654 folds into the PTS EIIA type-1 domain. H602 serves as the catalytic Tele-phosphohistidine intermediate; for EIIA activity.

The protein localises to the cell membrane. The catalysed reaction is D-mannose(out) + N(pros)-phospho-L-histidyl-[protein] = D-mannose 6-phosphate(in) + L-histidyl-[protein]. In terms of biological role, the phosphoenolpyruvate-dependent sugar phosphotransferase system (sugar PTS), a major carbohydrate active -transport system, catalyzes the phosphorylation of incoming sugar substrates concomitantly with their translocation across the cell membrane. This system is involved in mannose transport. In Corynebacterium glutamicum (strain ATCC 13032 / DSM 20300 / JCM 1318 / BCRC 11384 / CCUG 27702 / LMG 3730 / NBRC 12168 / NCIMB 10025 / NRRL B-2784 / 534), this protein is PTS system mannose-specific EIIBCA component (ptsM).